The chain runs to 391 residues: Pyruvate dehydrogenase E1 component subunit alpha, mitochondrial (391 aa).

The N-terminal 26 residues, 1–26, are a transit peptide targeting the mitochondrion; that stretch reads MALSTSRAINHIMKPLSAAVCATRRL. Positions 92, 118, 119, 167, 169, 198, 199, 200, 227, and 229 each coordinate pyruvate. Thiamine diphosphate contacts are provided by tyrosine 118, arginine 119, glycine 167, valine 169, aspartate 198, glycine 199, alanine 200, and asparagine 227. Aspartate 198 provides a ligand contact to Mg(2+). Mg(2+)-binding residues include asparagine 227 and tyrosine 229. Thiamine diphosphate is bound at residue histidine 293. The tract at residues 294–313 is disordered; it reads SMSDPGSTYRTRDEISGVRQ. Over residues 303–313 the composition is skewed to basic and acidic residues; sequence RTRDEISGVRQ.

As to quaternary structure, tetramer of 2 alpha and 2 beta subunits. It depends on thiamine diphosphate as a cofactor. The cofactor is Mg(2+).

The protein localises to the mitochondrion matrix. The enzyme catalyses N(6)-[(R)-lipoyl]-L-lysyl-[protein] + pyruvate + H(+) = N(6)-[(R)-S(8)-acetyldihydrolipoyl]-L-lysyl-[protein] + CO2. E1 activity is regulated by phosphorylation (inactivation) and dephosphorylation (activation) of the alpha subunit. The pyruvate dehydrogenase complex catalyzes the overall conversion of pyruvate to acetyl-CoA and CO(2). It contains multiple copies of three enzymatic components: pyruvate dehydrogenase (E1), dihydrolipoamide acetyltransferase (E2) and lipoamide dehydrogenase (E3). In Solanum tuberosum (Potato), this protein is Pyruvate dehydrogenase E1 component subunit alpha, mitochondrial.